Reading from the N-terminus, the 392-residue chain is MSRAALLSLTLTDFRSYERATLRPDGASVYLFGANGAGKTNLLEAISLLSPGKGLRGSSLIEVGRRLPGEATGRAWAVAAETEAPQTDFGQDEPVRLGTGVELAGAARRIVRIDGETVPPGRLADHVRPIWLTPAQDRLFLEAASERRRFFDRLVFAGEPAHAGHANAYDKAQRERMRLLTDAAESGQPADAVWLTALEARLGAAGALMANARARTLMALQAEIDSRGDRPFPRARLALTGEWEKLALVGVEIAEIEARLAAALAAARPRDGAAGRALTGPHRGDLAIHHVDKDRPAAECSTGEQKALILNLVLAQAARLSRAKDAPNPILLLDEVAAHLDLKRRAALADEITALGLQAFLTGTDQSLFDHLKGRALGVRVSELGLTALEDV.

33–40 (GANGAGKT) contacts ATP.

It belongs to the RecF family.

Its subcellular location is the cytoplasm. The RecF protein is involved in DNA metabolism; it is required for DNA replication and normal SOS inducibility. RecF binds preferentially to single-stranded, linear DNA. It also seems to bind ATP. This is DNA replication and repair protein RecF from Caulobacter sp. (strain K31).